Consider the following 832-residue polypeptide: Mechanosensitive cation channel TMEM63B (832 aa).

Residues Met-1–Gly-40 lie on the Extracellular side of the membrane. Residues Val-41 to Val-65 traverse the membrane as a helical segment. Cys-51 is lipidated: S-palmitoyl cysteine. Residues Ala-66 to Gly-145 are Cytoplasmic-facing. The short motif at Arg-86–Arg-88 is the Mediates endoplasmic reticulum retention element. Residues Ser-111, Ser-113, Ser-114, and Ser-115 each carry the phosphoserine modification. The S-palmitoyl cysteine moiety is linked to residue Cys-126. A helical transmembrane segment spans residues Gly-146–Phe-178. At Ser-179 to Asn-202 the chain is on the extracellular side. A helical transmembrane segment spans residues Asn-203–Thr-227. Residues Ser-228–Gly-427 are Cytoplasmic-facing. Positions Arg-231–Arg-426 are intracellular linker IL2; confers mechanosensitivity. S-palmitoyl cysteine attachment occurs at residues Cys-382 and Cys-398. The chain crosses the membrane as a helical span at residues Phe-428 to Thr-457. Residues Met-458–Asn-472 are Extracellular-facing. Asn-462 is a glycosylation site (N-linked (GlcNAc...) asparagine). A helical membrane pass occupies residues Pro-473–Glu-502. Over Ala-503–Thr-506 the chain is Cytoplasmic. Residues Arg-507–Trp-543 traverse the membrane as a helical segment. The Extracellular portion of the chain corresponds to Leu-544–Gly-566. Residues Ala-567–Cys-599 form a helical membrane-spanning segment. The tract at residues Ala-567–Cys-599 is gating helix. Residues Leu-600 to Gln-619 lie on the Cytoplasmic side of the membrane. Residues Phe-620–Ser-638 traverse the membrane as a helical segment. Over Ile-639–Cys-641 the chain is Extracellular. A helical transmembrane segment spans residues Pro-642–Ala-666. The Cytoplasmic portion of the chain corresponds to Tyr-667–Asp-673. A helical transmembrane segment spans residues Lys-674–Arg-702. At Thr-703–Ala-707 the chain is on the extracellular side. Residues Pro-708 to Val-728 traverse the membrane as a helical segment. Residues Cys-726 and Cys-729 are each lipidated (S-palmitoyl cysteine). Topologically, residues Cys-729 to Gln-832 are cytoplasmic. Disordered stretches follow at residues Thr-748–Lys-767 and Leu-776–Phe-818. Positions Asp-749–Arg-758 are enriched in polar residues. Low complexity predominate over residues Pro-789–Ser-801.

The protein belongs to the CSC1 (TC 1.A.17) family. Monomer. Interacts with SLC19A2; interaction is required for the phospholipid scramblase activity. Palmitoylation is required for localization to the plasma membrane and stability. Expressed in cochlear hair cells (at protein level). Highly expressed in the subfornical organ of the brain. Expressed in small intestine. In terms of tissue distribution, brain-specific.

It localises to the cell membrane. It is found in the endoplasmic reticulum membrane. The protein localises to the lysosome membrane. Its subcellular location is the early endosome membrane. The enzyme catalyses Ca(2+)(in) = Ca(2+)(out). The catalysed reaction is Mg(2+)(in) = Mg(2+)(out). It carries out the reaction K(+)(in) = K(+)(out). It catalyses the reaction Na(+)(in) = Na(+)(out). The enzyme catalyses Cs(+)(in) = Cs(+)(out). The catalysed reaction is a 1,2-diacyl-sn-glycero-3-phosphocholine(in) = a 1,2-diacyl-sn-glycero-3-phosphocholine(out). It carries out the reaction a sphingomyelin(in) = a sphingomyelin(out). Its function is as follows. Mechanosensitive cation channel with low conductance and high activation threshold. Osmosensitive cation channel preferentially activated by hypotonic stress. Also acts as a phospholipid scramblase in response to changes in membrane structure: upon changes in membrane curvature and thickness, alters its conformation and translocates phospholipids, such as phosphatidylcholine and sphingomyelin, thereby controlling plasma membrane lipid distribution. Forms a heterodimer with SLC19A2, which mediates phospholipid scramblase activity following Ca(2+) stimulation. Expressed in excitatory neurons of the subfornical organ and functions as a thirst receptor that mediates neuronal response to hyperosmolality to drive thirst and drinking behavior. Facilitates intestinal motility by promoting proliferation of intestinal stem cells. Essential for the baby's first breath and respiration throughout life. Upon lung inflation conducts cation currents in alveolar type 1 and 2 cells triggering lamellar body exocytosis and surfactant secretion into airspace. Acts as an osmosensor in cochlear outer hair cells (OHCs) where it mediates calcium influx and regulatory volume decrease response. Required for the maintenance of OHC morphology, OHC survival and normal hearing. Brain-specific osmosensitive calcium channel isoform. In Mus musculus (Mouse), this protein is Mechanosensitive cation channel TMEM63B.